Reading from the N-terminus, the 61-residue chain is MAKKSMMERHAKEQKFKVREYNRCPLCGRSRAYLRRFDMCRLCFRDLASKAQIPGVKKSSW.

Zn(2+) is bound by residues cysteine 24, cysteine 27, cysteine 40, and cysteine 43.

The protein belongs to the universal ribosomal protein uS14 family. Zinc-binding uS14 subfamily. Part of the 30S ribosomal subunit. Contacts proteins S3 and S10. Requires Zn(2+) as cofactor.

In terms of biological role, binds 16S rRNA, required for the assembly of 30S particles and may also be responsible for determining the conformation of the 16S rRNA at the A site. In Leptospira biflexa serovar Patoc (strain Patoc 1 / Ames), this protein is Small ribosomal subunit protein uS14.